The sequence spans 145 residues: Large ribosomal subunit protein uL15 (145 aa).

The disordered stretch occupies residues G20 to H39.

Belongs to the universal ribosomal protein uL15 family.

In Trypanosoma brucei brucei, this protein is Large ribosomal subunit protein uL15 (RPL27A).